The chain runs to 1052 residues: Protein HelA (1052 aa).

A run of 13 helical transmembrane segments spans residues 14–34, 121–141, 348–368, 369–389, 393–413, 450–470, 483–503, 537–557, 878–898, 903–923, 934–954, 979–999, and 1011–1031; these read WFVL…FQRL, LPPG…EIFM, GALL…AALI, TAMV…ENQI, LMSL…IIVE, SIFG…LTGV, IIAL…AVAI, VVIS…FHLG, LQIV…ISFG, ALLV…ALWL, VGFI…ITFI, PVLM…LATG, and VVIG…PGLY.

Belongs to the resistance-nodulation-cell division (RND) (TC 2.A.6) family.

It localises to the cell inner membrane. In terms of biological role, presumed to function with HelC and HelB in efflux of an unidentified substrate. The protein is Protein HelA (helA) of Legionella pneumophila.